The sequence spans 357 residues: Protein RecA (357 aa).

Residue 73–80 participates in ATP binding; sequence GPESSGKT.

Belongs to the RecA family.

The protein localises to the cytoplasm. Can catalyze the hydrolysis of ATP in the presence of single-stranded DNA, the ATP-dependent uptake of single-stranded DNA by duplex DNA, and the ATP-dependent hybridization of homologous single-stranded DNAs. It interacts with LexA causing its activation and leading to its autocatalytic cleavage. The polypeptide is Protein RecA (Nitratidesulfovibrio vulgaris (strain ATCC 29579 / DSM 644 / CCUG 34227 / NCIMB 8303 / VKM B-1760 / Hildenborough) (Desulfovibrio vulgaris)).